Reading from the N-terminus, the 388-residue chain is Probable protein phosphatase 2C 43 (388 aa).

Positions 53-352 (EFSFAVVQAN…DDITVVVVFI (300 aa)) constitute a PPM-type phosphatase domain. Mn(2+)-binding residues include D84, G85, D284, and D343.

It belongs to the PP2C family. The cofactor is Mg(2+). It depends on Mn(2+) as a cofactor.

It carries out the reaction O-phospho-L-seryl-[protein] + H2O = L-seryl-[protein] + phosphate. The enzyme catalyses O-phospho-L-threonyl-[protein] + H2O = L-threonyl-[protein] + phosphate. In Oryza sativa subsp. japonica (Rice), this protein is Probable protein phosphatase 2C 43.